A 79-amino-acid chain; its full sequence is Immunity protein CdiI (79 aa).

2 consecutive transmembrane segments (helical) span residues 12–32 and 51–71; these read IIFF…IGLI and VVLF…LGLW.

In terms of assembly, probably interacts with cognate toxin CdiA.

It localises to the cell inner membrane. Its function is as follows. Immunity protein component of a toxin-immunity protein module, which functions as a cellular contact-dependent growth inhibition (CDI) system. CDI modules allow bacteria to communicate with and inhibit the growth of closely related neighboring bacteria in a contact-dependent fashion. Protects cells against CdiA from the same strain, its cognate toxin protein. Growth inhibition is reversible upon induction of this protein, occurring about 2.5 hours after induction, and requires an energy source. Does not protect against non-cognate CdiA from E.coli strain 563 / UPEC, D.dadantii strain 3937 or Y.pestis strain CO92. The sequence is that of Immunity protein CdiI from Escherichia coli.